The primary structure comprises 249 residues: Undecaprenyl-diphosphatase (249 aa).

A run of 8 helical transmembrane segments spans residues 11–31 (GLTE…TAIF), 35–55 (PDVG…LIFV), 80–100 (LVLS…FIES), 101–121 (VFSS…LMLL), 135–155 (IPYL…LPGI), 180–200 (FLMS…KVAF), 202–222 (TEQI…LYLV), and 226–246 (VIGG…FFVL).

Belongs to the UppP family.

The protein resides in the cell membrane. The enzyme catalyses di-trans,octa-cis-undecaprenyl diphosphate + H2O = di-trans,octa-cis-undecaprenyl phosphate + phosphate + H(+). Catalyzes the dephosphorylation of undecaprenyl diphosphate (UPP). The protein is Undecaprenyl-diphosphatase of Methanococcus maripaludis (strain C6 / ATCC BAA-1332).